Reading from the N-terminus, the 456-residue chain is tRNA-2-methylthio-N(6)-dimethylallyladenosine synthase (456 aa).

Residues 9–126 form the MTTase N-terminal domain; sequence KKLYIKTHGC…LPEMMETKKS (118 aa). Cys18, Cys55, Cys89, Cys163, Cys167, and Cys170 together coordinate [4Fe-4S] cluster. A Radical SAM core domain is found at 149–381; it reads DADGVSAFVS…QDRITQQAMA (233 aa). In terms of domain architecture, TRAM spans 384-448; the sequence is RRMVGNTERI…PNSLRGSLIA (65 aa).

The protein belongs to the methylthiotransferase family. MiaB subfamily. Monomer. [4Fe-4S] cluster is required as a cofactor.

It localises to the cytoplasm. The catalysed reaction is N(6)-dimethylallyladenosine(37) in tRNA + (sulfur carrier)-SH + AH2 + 2 S-adenosyl-L-methionine = 2-methylsulfanyl-N(6)-dimethylallyladenosine(37) in tRNA + (sulfur carrier)-H + 5'-deoxyadenosine + L-methionine + A + S-adenosyl-L-homocysteine + 2 H(+). Its function is as follows. Catalyzes the methylthiolation of N6-(dimethylallyl)adenosine (i(6)A), leading to the formation of 2-methylthio-N6-(dimethylallyl)adenosine (ms(2)i(6)A) at position 37 in tRNAs that read codons beginning with uridine. The chain is tRNA-2-methylthio-N(6)-dimethylallyladenosine synthase from Cellvibrio japonicus (strain Ueda107) (Pseudomonas fluorescens subsp. cellulosa).